The following is a 137-amino-acid chain: Beta-synuclein (137 aa).

2 repeat units span residues 20 to 30 and 31 to 41. The 4 X 11 AA tandem repeats of [EGS]-K-T-K-[EQ]-[GQ]-V-X(4) stretch occupies residues 20 to 67; sequence EKTKQGVTEAAEKTKEGVLYVGSKTKEGVVQGVASVAEKTKEQASHLG. The 3; approximate repeat unit spans residues 42–56; sequence SKTKEGVVQGVASVA. Copy 4 of the repeat occupies 57-67; it reads EKTKEQASHLG. Basic and acidic residues predominate over residues 88–97; sequence EFPTDLKPEE. Residues 88–137 form a disordered region; sequence EFPTDLKPEEVAQEAAEEPLIEPLMEPEGESYEDSPQEEYQEYEPEAKGP. The span at 98-131 shows a compositional bias: acidic residues; that stretch reads VAQEAAEEPLIEPLMEPEGESYEDSPQEEYQEYE. At Ser-118 the chain carries Phosphoserine; by BARK1, CK2 and GRK5.

This sequence belongs to the synuclein family. Phosphorylated. Phosphorylation by G-protein coupled receptor kinases (GRK) is more efficient than phosphorylation by CK1, CK2 and CaM-kinase II. Expressed specifically in brain.

The protein resides in the cytoplasm. May be involved in neuronal plasticity. The polypeptide is Beta-synuclein (Sncb) (Rattus norvegicus (Rat)).